We begin with the raw amino-acid sequence, 448 residues long: Allantoinase (448 aa).

His-60, His-62, Lys-147, His-183, His-239, and Asp-312 together coordinate Zn(2+). Lys-147 carries the post-translational modification N6-carboxylysine.

The protein belongs to the metallo-dependent hydrolases superfamily. Allantoinase family. As to quaternary structure, homotetramer. Zn(2+) is required as a cofactor. Post-translationally, carboxylation allows a single lysine to coordinate two zinc ions.

It carries out the reaction (S)-allantoin + H2O = allantoate + H(+). It participates in nitrogen metabolism; (S)-allantoin degradation; allantoate from (S)-allantoin: step 1/1. Its function is as follows. Catalyzes the conversion of allantoin (5-ureidohydantoin) to allantoic acid by hydrolytic cleavage of the five-member hydantoin ring. In Deinococcus radiodurans (strain ATCC 13939 / DSM 20539 / JCM 16871 / CCUG 27074 / LMG 4051 / NBRC 15346 / NCIMB 9279 / VKM B-1422 / R1), this protein is Allantoinase.